Reading from the N-terminus, the 128-residue chain is Ribosome-binding factor A (128 aa).

The protein belongs to the RbfA family. In terms of assembly, monomer. Binds 30S ribosomal subunits, but not 50S ribosomal subunits or 70S ribosomes.

The protein resides in the cytoplasm. In terms of biological role, one of several proteins that assist in the late maturation steps of the functional core of the 30S ribosomal subunit. Associates with free 30S ribosomal subunits (but not with 30S subunits that are part of 70S ribosomes or polysomes). Required for efficient processing of 16S rRNA. May interact with the 5'-terminal helix region of 16S rRNA. This is Ribosome-binding factor A from Saccharophagus degradans (strain 2-40 / ATCC 43961 / DSM 17024).